The primary structure comprises 71 residues: Small ribosomal subunit protein bS21 (71 aa).

The segment at 43-71 is disordered; the sequence is TERKRAKASAVKRHAKKLARENARRTRLY. Positions 46–59 are enriched in basic residues; it reads KRAKASAVKRHAKK. Over residues 60-71 the composition is skewed to basic and acidic residues; that stretch reads LARENARRTRLY.

Belongs to the bacterial ribosomal protein bS21 family.

In Pectobacterium atrosepticum (strain SCRI 1043 / ATCC BAA-672) (Erwinia carotovora subsp. atroseptica), this protein is Small ribosomal subunit protein bS21.